We begin with the raw amino-acid sequence, 173 residues long: Putative phosphoesterase GK0864 (173 aa).

Histidine 34 functions as the Proton donor in the catalytic mechanism. 2 short sequence motifs (HXTX) span residues 34–37 and 115–118; these read HITL and HITI. Histidine 115 acts as the Proton acceptor in catalysis.

The protein belongs to the 2H phosphoesterase superfamily. YjcG family.

In Geobacillus kaustophilus (strain HTA426), this protein is Putative phosphoesterase GK0864.